The chain runs to 351 residues: Lipoyl synthase, mitochondrial (351 aa).

Residues C84, C89, C95, C115, C119, C122, and S330 each contribute to the [4Fe-4S] cluster site. In terms of domain architecture, Radical SAM core spans 100 to 319 (DKSKATATIM…QKRAMDMGFL (220 aa)).

This sequence belongs to the radical SAM superfamily. Lipoyl synthase family. [4Fe-4S] cluster serves as cofactor.

It is found in the mitochondrion. The catalysed reaction is [[Fe-S] cluster scaffold protein carrying a second [4Fe-4S](2+) cluster] + N(6)-octanoyl-L-lysyl-[protein] + 2 oxidized [2Fe-2S]-[ferredoxin] + 2 S-adenosyl-L-methionine + 4 H(+) = [[Fe-S] cluster scaffold protein] + N(6)-[(R)-dihydrolipoyl]-L-lysyl-[protein] + 4 Fe(3+) + 2 hydrogen sulfide + 2 5'-deoxyadenosine + 2 L-methionine + 2 reduced [2Fe-2S]-[ferredoxin]. It functions in the pathway protein modification; protein lipoylation via endogenous pathway; protein N(6)-(lipoyl)lysine from octanoyl-[acyl-carrier-protein]: step 2/2. Catalyzes the radical-mediated insertion of two sulfur atoms into the C-6 and C-8 positions of the octanoyl moiety bound to the lipoyl domains of lipoate-dependent enzymes, thereby converting the octanoylated domains into lipoylated derivatives. The polypeptide is Lipoyl synthase, mitochondrial (Yarrowia lipolytica (strain CLIB 122 / E 150) (Yeast)).